A 223-amino-acid polypeptide reads, in one-letter code: Ribose-5-phosphate isomerase A (223 aa).

Substrate-binding positions include 32 to 35 (TGST), 85 to 88 (DGAD), and 98 to 101 (KGGG). The active-site Proton acceptor is the Glu-107. Lys-125 contacts substrate.

It belongs to the ribose 5-phosphate isomerase family. In terms of assembly, homodimer.

The catalysed reaction is aldehydo-D-ribose 5-phosphate = D-ribulose 5-phosphate. It functions in the pathway carbohydrate degradation; pentose phosphate pathway; D-ribose 5-phosphate from D-ribulose 5-phosphate (non-oxidative stage): step 1/1. Catalyzes the reversible conversion of ribose-5-phosphate to ribulose 5-phosphate. This chain is Ribose-5-phosphate isomerase A, found in Stutzerimonas stutzeri (strain A1501) (Pseudomonas stutzeri).